The chain runs to 345 residues: MRFKCFGSEETEQSSKIDKSIETDRRKLRKDVKLLLLGPGESGKSTIFKQMKIIQEDGGYSVEELLEYRAFVYSNCISQMEALLTASAKLNIELEVENKQRAANVLRRTIGNEPWLLLAADIKHLWEDKGIKETYAQKDKHFQLNDSAAYFFDNIDRYMREDFVPNEQDVLRCRVRTTGIQESEFTFDKIRLKIVDVGGQRSQRRKWIHCFDCVTAVIFVAAMSDYDQVLREDESVNRTRESLALFKEIVNCDYFKETPIVLFLNKKDLFKEKLKRVPLQSCFSDYTGPNKYKDAAMFIQSQYLAQGPSPRTIYTHATCAVDTENIKFVFRAVRQTILSQALEHF.

A G-alpha domain is found at 30 to 345 (KDVKLLLLGP…TILSQALEHF (316 aa)). The interval 33 to 46 (KLLLLGPGESGKST) is G1 motif. Residues 38–45 (GPGESGKS), 171–177 (LRCRVRT), 196–200 (DVGGQ), 265–268 (NKKD), and alanine 320 contribute to the GTP site. Mg(2+) is bound by residues serine 45 and threonine 177. Residues 169-177 (DVLRCRVRT) are G2 motif. The tract at residues 192-201 (LKIVDVGGQR) is G3 motif. Residues 261–268 (VLFLNKKD) form a G4 motif region. The interval 318–323 (TCAVDT) is G5 motif.

This sequence belongs to the G-alpha family. As to quaternary structure, g proteins are composed of 3 units; alpha, beta and gamma. The alpha chain contains the guanine nucleotide binding site.

Functionally, guanine nucleotide-binding proteins (G proteins) are involved as modulators or transducers in various transmembrane signaling systems. G alpha-4 plays a role in morphogenesis of the multicellular structure. This chain is Guanine nucleotide-binding protein alpha-4 subunit (gpaD), found in Dictyostelium discoideum (Social amoeba).